Here is a 1235-residue protein sequence, read N- to C-terminus: Major DNA-binding protein (1235 aa).

The tract at residues 536–584 is disordered; it reads GGLDGKGDDGVPGGGAGGGGGRDVSGGPSDGLGGGRGGGGGGDSGGMMG. A compositionally biased stretch (gly residues) spans 545-584; it reads GVPGGGAGGGGGRDVSGGPSDGLGGGRGGGGGGDSGGMMG. The Required for filament formation signature appears at 846–847; that stretch reads FW. Positions 1214-1226 are enriched in gly residues; that stretch reads GVGGSSGGGGGSG. The interval 1214 to 1235 is disordered; that stretch reads GVGGSSGGGGGSGLLPAKRSRL. A required for nuclear localization region spans residues 1232–1235; it reads RSRL.

Belongs to the herpesviridae major DNA-binding protein family. In terms of assembly, homooligomers. Forms double-helical filaments necessary for the formation of replication compartments within the host nucleus. Interacts with the origin-binding protein. Interacts with the helicase primase complex; this interaction stimulates primer synthesis activity of the helicase-primase complex. Interacts with the DNA polymerase. Interacts with the alkaline exonuclease; this interaction increases its nuclease processivity.

The protein localises to the host nucleus. Its function is as follows. Plays several crucial roles in viral infection. Participates in the opening of the viral DNA origin to initiate replication by interacting with the origin-binding protein. May disrupt loops, hairpins and other secondary structures present on ssDNA to reduce and eliminate pausing of viral DNA polymerase at specific sites during elongation. Promotes viral DNA recombination by performing strand-transfer, characterized by the ability to transfer a DNA strand from a linear duplex to a complementary single-stranded DNA circle. Can also catalyze the renaturation of complementary single strands. Additionally, reorganizes the host cell nucleus, leading to the formation of prereplicative sites and replication compartments. This process is driven by the protein which can form double-helical filaments in the absence of DNA. This is Major DNA-binding protein from Homo sapiens (Human).